We begin with the raw amino-acid sequence, 332 residues long: Glyceraldehyde-3-phosphate dehydrogenase 1 (332 aa).

NAD(+) is bound by residues 11 to 12 (RI), D32, and R77. D-glyceraldehyde 3-phosphate-binding positions include 148–150 (SCT), T179, 208–209 (TG), and R231. Catalysis depends on C149, which acts as the Nucleophile. Residue N313 coordinates NAD(+).

Belongs to the glyceraldehyde-3-phosphate dehydrogenase family. In terms of assembly, homotetramer.

It is found in the cytoplasm. The enzyme catalyses D-glyceraldehyde 3-phosphate + phosphate + NAD(+) = (2R)-3-phospho-glyceroyl phosphate + NADH + H(+). The protein operates within carbohydrate degradation; glycolysis; pyruvate from D-glyceraldehyde 3-phosphate: step 1/5. This is Glyceraldehyde-3-phosphate dehydrogenase 1 (Gapdh1) from Drosophila melanogaster (Fruit fly).